Here is a 128-residue protein sequence, read N- to C-terminus: Flagellar basal body rod protein FlgB (128 aa).

The protein belongs to the flagella basal body rod proteins family. In terms of assembly, the basal body constitutes a major portion of the flagellar organelle and consists of a number of rings mounted on a central rod. In Gram-negative bacteria, at least four rings, L, P, S and M are present, whereas Gram-positive bacteria lack the L and P rings. The rod consists of about 26 subunits of FlgG in the distal portion, and FlgB, FlgC and FlgF build up the proximal portion of the rod with about 6 subunits each. Rod assembly occurs by export via the flagellum-specific pathway of its constituent proteins and by their incorporation into the rod structure in the probable order of FlgB, FlgC, FlgF and FlgG. Another protein, FliE, also assembles onto the stable rod structure.

The protein resides in the bacterial flagellum basal body. Functionally, structural component of flagellum, the bacterial motility apparatus. Part of the rod structure of flagellar basal body. This chain is Flagellar basal body rod protein FlgB, found in Cereibacter sphaeroides (strain ATCC 17029 / ATH 2.4.9) (Rhodobacter sphaeroides).